Here is a 482-residue protein sequence, read N- to C-terminus: Pre-glycoprotein polyprotein GP complex (482 aa).

A lipid anchor (N-myristoyl glycine; by host) is attached at glycine 2. The Extracellular segment spans residues glycine 2–glutamate 17. A helical membrane pass occupies residues alanine 18–valine 32. Position 33 (lysine 33) is a topological domain, cytoplasmic. Residues glycine 34–alanine 53 traverse the membrane as a helical segment. 2 consecutive stretches face the extracellular side: residues glycine 54–serine 58 and glutamate 59–aspartate 421. Cysteine 57 contacts Zn(2+). Residues asparagine 83 and asparagine 95 are each glycosylated (N-linked (GlcNAc...) asparagine; by host). 5 disulfide bridges follow: cysteine 92–cysteine 224, cysteine 134–cysteine 162, cysteine 205–cysteine 211, cysteine 269–cysteine 282, and cysteine 353–cysteine 374. 2 N-linked (GlcNAc...) asparagine; by host glycosylation sites follow: asparagine 164 and asparagine 176. N-linked (GlcNAc...) asparagine; by host glycosylation is found at asparagine 354, asparagine 362, asparagine 379, and asparagine 384. A helical transmembrane segment spans residues isoleucine 422–proline 442. The Cytoplasmic portion of the chain corresponds to threonine 443 to histidine 482. Residues histidine 444, histidine 446, cysteine 452, histidine 456, cysteine 464, cysteine 466, and histidine 482 each contribute to the Zn(2+) site.

This sequence belongs to the arenaviridae GPC protein family. Homotetramer; disulfide-linked. As to quaternary structure, homotetramer. GP2 homotetramers bind through ionic interactions with GP1 homotetramers to form the GP complex together with the stable signal peptide. The GP-C polyprotein interacts with the host protease MBTPS1/SKI-1 resulting in the polyprotein processing. Post-translationally, specific enzymatic cleavages in vivo yield mature proteins. GP-C polyprotein is cleaved in the endoplasmic reticulum by the host protease MBTPS1. Only cleaved glycoprotein is incorporated into virions. The SSP remains stably associated with the GP complex following cleavage by signal peptidase and plays crucial roles in the trafficking of GP through the secretory pathway. In terms of processing, myristoylation is necessary for GP2-mediated fusion activity.

The protein localises to the virion membrane. It is found in the host endoplasmic reticulum membrane. It localises to the host Golgi apparatus membrane. The protein resides in the host cell membrane. Its function is as follows. Class I viral fusion protein that directs fusion of viral and host endosomal membranes, leading to delivery of the nucleocapsid into the cytoplasm. Membrane fusion is mediated by irreversible conformational changes induced upon acidification in the endosome. In terms of biological role, stable signal peptide (SSP): cleaved and functions as a signal peptide. In addition, it is also retained as the third component of the GP complex. The SSP is required for efficient glycoprotein expression, post-translational maturation cleavage of GP1 and GP2, glycoprotein transport to the cell surface plasma membrane, formation of infectious virus particles, and acid pH-dependent glycoprotein-mediated cell fusion. Interacts with the host receptor. The chain is Pre-glycoprotein polyprotein GP complex from Artibeus (neotropical fruit bats).